The following is a 508-amino-acid chain: Glutamate--cysteine ligase, chloroplastic (508 aa).

A chloroplast-targeting transit peptide spans 1 to 59; that stretch reads MTTIFRLASSSSPSLRHDATPHNFHIRKTSISNTFSFSSKNSLSFKRILTSGGSRRFIV. 2 cysteine pairs are disulfide-bonded: cysteine 172–cysteine 392 and cysteine 335–cysteine 350.

The protein belongs to the carboxylate-amine ligase family. Glutamate--cysteine ligase type 2 subfamily. In terms of assembly, homodimer or monomer when oxidized or reduced, respectively. Post-translationally, the Cys-172-Cys-392 disulfide bridge is known to modulate the enzyme activity according to the redox status. The oxidized form constitutes the active enzyme.

Its subcellular location is the plastid. It localises to the chloroplast. The enzyme catalyses L-cysteine + L-glutamate + ATP = gamma-L-glutamyl-L-cysteine + ADP + phosphate + H(+). Its pathway is sulfur metabolism; glutathione biosynthesis; glutathione from L-cysteine and L-glutamate: step 1/2. This Medicago truncatula (Barrel medic) protein is Glutamate--cysteine ligase, chloroplastic (GSH1).